The following is a 284-amino-acid chain: tRNA-cytidine(32) 2-sulfurtransferase (284 aa).

A PP-loop motif motif is present at residues 44-49 (SGGKDS). C119, C122, and C210 together coordinate [4Fe-4S] cluster.

The protein belongs to the TtcA family. As to quaternary structure, homodimer. Mg(2+) is required as a cofactor. It depends on [4Fe-4S] cluster as a cofactor.

It localises to the cytoplasm. The enzyme catalyses cytidine(32) in tRNA + S-sulfanyl-L-cysteinyl-[cysteine desulfurase] + AH2 + ATP = 2-thiocytidine(32) in tRNA + L-cysteinyl-[cysteine desulfurase] + A + AMP + diphosphate + H(+). The protein operates within tRNA modification. In terms of biological role, catalyzes the ATP-dependent 2-thiolation of cytidine in position 32 of tRNA, to form 2-thiocytidine (s(2)C32). The sulfur atoms are provided by the cysteine/cysteine desulfurase (IscS) system. This is tRNA-cytidine(32) 2-sulfurtransferase from Chromohalobacter salexigens (strain ATCC BAA-138 / DSM 3043 / CIP 106854 / NCIMB 13768 / 1H11).